The primary structure comprises 312 residues: Olfactory receptor 4F6 (312 aa).

Topologically, residues 1 to 25 (MDEANHSVVSEFVFLGLSDSRKIQL) are extracellular. N-linked (GlcNAc...) asparagine glycosylation occurs at Asn5. A helical membrane pass occupies residues 26–49 (LLFLFFSVFYVSSLMGNLLIVLTV). Residues 50–57 (TSDPRLQS) are Cytoplasmic-facing. A helical transmembrane segment spans residues 58–79 (PMYFLLANLSIINLVFCSSTAP). At 80–100 (KMIYDLFRKHKTISFGGCVVQ) the chain is on the extracellular side. A disulfide bridge connects residues Cys97 and Cys189. The helical transmembrane segment at 101 to 120 (IFFIHAVGGTEMVLLIAMAF) threads the bilayer. Residues 121-139 (DRYVAICKPLHYLTIMNPQ) lie on the Cytoplasmic side of the membrane. The chain crosses the membrane as a helical span at residues 140 to 158 (RCILFLVISWIIGIIHSVI). The Extracellular segment spans residues 159–195 (QLAFVVDLLFCGPNELDSFFCDLPRFIKLACIETYTL). The helical transmembrane segment at 196–219 (GFMVTANSGFISLASFLILIISYI) threads the bilayer. The Cytoplasmic portion of the chain corresponds to 220-235 (FILVTVQKKSSGGIFK). A helical transmembrane segment spans residues 236–258 (AFSMLSAHVIVVVLVFGPLIFFY). The Extracellular segment spans residues 259-269 (IFPFPTSHLDK). The helical transmembrane segment at 270-289 (FLAIFDAVITPVLNPVIYTF) threads the bilayer. Over 290-312 (RNKEMMVAMRRRCSQFVNYSKIF) the chain is Cytoplasmic.

This sequence belongs to the G-protein coupled receptor 1 family.

Its subcellular location is the cell membrane. Its function is as follows. Odorant receptor. In Homo sapiens (Human), this protein is Olfactory receptor 4F6 (OR4F6).